Consider the following 416-residue polypeptide: Adenylosuccinate synthetase (416 aa).

GTP is bound by residues 13–19 (GDEGKGK) and 41–43 (GHT). Aspartate 14 (proton acceptor) is an active-site residue. Positions 14 and 41 each coordinate Mg(2+). Residues 14–17 (DEGK), 39–42 (NAGH), threonine 126, arginine 140, glutamine 220, threonine 235, and arginine 299 each bind IMP. Histidine 42 serves as the catalytic Proton donor. 295 to 301 (VSTGRKR) contacts substrate. Residues arginine 301, 327–329 (KLD), and 405–407 (STS) contribute to the GTP site.

The protein belongs to the adenylosuccinate synthetase family. Homodimer. The cofactor is Mg(2+).

Its subcellular location is the cytoplasm. It catalyses the reaction IMP + L-aspartate + GTP = N(6)-(1,2-dicarboxyethyl)-AMP + GDP + phosphate + 2 H(+). The protein operates within purine metabolism; AMP biosynthesis via de novo pathway; AMP from IMP: step 1/2. Its function is as follows. Plays an important role in the de novo pathway of purine nucleotide biosynthesis. Catalyzes the first committed step in the biosynthesis of AMP from IMP. The sequence is that of Adenylosuccinate synthetase from Campylobacter jejuni subsp. jejuni serotype O:6 (strain 81116 / NCTC 11828).